A 141-amino-acid chain; its full sequence is Large ribosomal subunit protein uL11 (141 aa).

It belongs to the universal ribosomal protein uL11 family. Part of the ribosomal stalk of the 50S ribosomal subunit. Interacts with L10 and the large rRNA to form the base of the stalk. L10 forms an elongated spine to which L12 dimers bind in a sequential fashion forming a multimeric L10(L12)X complex. One or more lysine residues are methylated.

Its function is as follows. Forms part of the ribosomal stalk which helps the ribosome interact with GTP-bound translation factors. The sequence is that of Large ribosomal subunit protein uL11 from Latilactobacillus sakei subsp. sakei (strain 23K) (Lactobacillus sakei subsp. sakei).